The primary structure comprises 437 residues: O-methyltransferase elcB (437 aa).

Aspartate 269 contributes to the S-adenosyl-L-methionine binding site. The active-site Proton acceptor is the histidine 319.

This sequence belongs to the class I-like SAM-binding methyltransferase superfamily. Cation-independent O-methyltransferase family. COMT subfamily.

The protein operates within secondary metabolite biosynthesis. In terms of biological role, O-methyltransferase; part of the gene cluster that mediates the biosynthesis of elsinochrome C, a perelyenequinone phytotoxin structurally similar to cercosporin. The first step of elsinochrome C biosynthesis is performed by the polyketide synthase elcA which catalyzes the formation of nor-toralactone. The starter unit acyltransferase (SAT) domain of elcA initiates polyketide extension by the selective utilization of acetyl-CoA, which is elongated to the heptaketide in the beta-ketoacyl synthase (KS) domain by successive condensations with six malonyl units introduced by the malonyl acyltransferase (MAT) domain. The product template (PT) domain catalyzes C4-C9 and C2-C11 aldol cyclizations and dehydrations to a trihydroxynaphthalene, which is thought to be delivered to the thioesterase (TE) domain for product release. The bifunctional enzyme elcB then methylates nor-toralactone to toralactone before conducting an unusual oxidative aromatic ring opening. The next step in perylenequinone biosynthesis is an O-methylation at the nascent OH-6 of the elcB product performed by the O-methyltransferase elcD. The oxidative coupling of the two monomeric naphthol units in perylenequinone biosynthesis is catalyzed by the FAD-dependent monooxygenase elcE and the multicopper oxidase elcG. ElcG might catalyze the first intermolecular coupling in a regio- and stereo-selective manner via a phenol radical coupling mechanism and the elcE could forge the second C-C bond intramolecularly via a hydride transfer mechanism. The fasciclin domain-containing protein elcF might also play a role duting this step. The last piece of the puzzle in the biosynthesis of elsinochrome C is the additional annulation by enolate coupling to afford the dihydrobenzo(ghi)perylenequinone system, catalyzed by the FAD-dependent monooxygenase elcH. In Phaeosphaeria nodorum (strain SN15 / ATCC MYA-4574 / FGSC 10173) (Glume blotch fungus), this protein is O-methyltransferase elcB.